The following is a 146-amino-acid chain: MKTFNAKAEEVERKWWIVDAAGQKVGRVATHVATILRGKNKAIYTPNVDTGDFVVVINTDKMELSGTKWQDKKYYSHTRFFGSLKEMTAAQAKEKDSTFIIHEAVRGMLPTNKLSRHVIMKMKAYTGAEHPHAAQKPALFTLPSKK.

It belongs to the universal ribosomal protein uL13 family. In terms of assembly, part of the 50S ribosomal subunit.

Functionally, this protein is one of the early assembly proteins of the 50S ribosomal subunit, although it is not seen to bind rRNA by itself. It is important during the early stages of 50S assembly. In Bdellovibrio bacteriovorus (strain ATCC 15356 / DSM 50701 / NCIMB 9529 / HD100), this protein is Large ribosomal subunit protein uL13.